The following is a 664-amino-acid chain: DNA ligase (664 aa).

Residues 31 to 35 (DSTYD), 80 to 81 (SL), and Glu110 contribute to the NAD(+) site. The active-site N6-AMP-lysine intermediate is Lys112. Positions 133, 167, 282, and 306 each coordinate NAD(+). Residues Cys400, Cys403, Cys418, and Cys423 each coordinate Zn(2+). Residues 583-664 (QSNAPLAGKT…LLEELAKYEG (82 aa)) enclose the BRCT domain.

Belongs to the NAD-dependent DNA ligase family. LigA subfamily. It depends on Mg(2+) as a cofactor. Mn(2+) serves as cofactor.

It catalyses the reaction NAD(+) + (deoxyribonucleotide)n-3'-hydroxyl + 5'-phospho-(deoxyribonucleotide)m = (deoxyribonucleotide)n+m + AMP + beta-nicotinamide D-nucleotide.. DNA ligase that catalyzes the formation of phosphodiester linkages between 5'-phosphoryl and 3'-hydroxyl groups in double-stranded DNA using NAD as a coenzyme and as the energy source for the reaction. It is essential for DNA replication and repair of damaged DNA. This is DNA ligase from Exiguobacterium sibiricum (strain DSM 17290 / CCUG 55495 / CIP 109462 / JCM 13490 / 255-15).